The primary structure comprises 452 residues: Zinc finger protein 277 (452 aa).

The C2H2-type 1 zinc-finger motif lies at 200-224 (LMCLYCEKIFRDRPTLKEHMRKKGH). The disordered stretch occupies residues 248-271 (APTPRKQHLQKRRRETASVSTVAD). Positions 252–261 (RKQHLQKRRR) are enriched in basic residues. The C2H2-type 2 zinc finger occupies 361-385 (LRCVTCDLQFDEEELLVEHMAQESH).

This sequence belongs to the ZNF277 family. In terms of assembly, interacts with components of the origin recognition complex (ORC) complex, Orc2 and Orc3, components of the SAGA transcription coactivator-HAT complex, Gcn5 and e(y)2, components of the mRNP biogenesis THO complex, thoc5 and e(y)2, and a component of the TFIID complex, TBP. Also interacts with polybromo, a component of the chromatin remodeling SWI/SNF complex.

It localises to the nucleus. The protein localises to the cytoplasm. In terms of biological role, DNA binding protein which is involved in the positive regulation of both basal and inducible transcription. Mainly localizes to active promoter sites and interacts with components of various transcription and replication regulatory complexes, such as the ORC, SAGA, THO, TFIID and SWI/SNF complexes. It may therefore regulate transcription by promoting the association of these complexes to their binding sites. The sequence is that of Zinc finger protein 277 from Drosophila melanogaster (Fruit fly).